The sequence spans 836 residues: Protein translocase subunit SecA (836 aa).

ATP-binding positions include Gln85, 103–107 (GEGKT), and Asp492. Positions 820, 822, 831, and 832 each coordinate Zn(2+).

The protein belongs to the SecA family. As to quaternary structure, monomer and homodimer. Part of the essential Sec protein translocation apparatus which comprises SecA, SecYEG and auxiliary proteins SecDF. Other proteins may also be involved. The cofactor is Zn(2+).

The protein localises to the cell membrane. The protein resides in the cytoplasm. It catalyses the reaction ATP + H2O + cellular proteinSide 1 = ADP + phosphate + cellular proteinSide 2.. Part of the Sec protein translocase complex. Interacts with the SecYEG preprotein conducting channel. Has a central role in coupling the hydrolysis of ATP to the transfer of proteins into and across the cell membrane, serving as an ATP-driven molecular motor driving the stepwise translocation of polypeptide chains across the membrane. The protein is Protein translocase subunit SecA of Clostridium botulinum (strain Alaska E43 / Type E3).